A 75-amino-acid chain; its full sequence is Small ribosomal subunit protein bS18 (75 aa).

It belongs to the bacterial ribosomal protein bS18 family. As to quaternary structure, part of the 30S ribosomal subunit. Forms a tight heterodimer with protein bS6.

In terms of biological role, binds as a heterodimer with protein bS6 to the central domain of the 16S rRNA, where it helps stabilize the platform of the 30S subunit. This is Small ribosomal subunit protein bS18 from Dinoroseobacter shibae (strain DSM 16493 / NCIMB 14021 / DFL 12).